Consider the following 154-residue polypeptide: Protein FasC (154 aa).

Belongs to the periplasmic pilus chaperone family.

In terms of biological role, could be required for the biogenesis of a putative fimbria. The polypeptide is Protein FasC (fasC) (Escherichia coli).